The chain runs to 177 residues: Adenine phosphoribosyltransferase (177 aa).

This sequence belongs to the purine/pyrimidine phosphoribosyltransferase family. In terms of assembly, homodimer.

The protein resides in the cytoplasm. The enzyme catalyses AMP + diphosphate = 5-phospho-alpha-D-ribose 1-diphosphate + adenine. Its pathway is purine metabolism; AMP biosynthesis via salvage pathway; AMP from adenine: step 1/1. Catalyzes a salvage reaction resulting in the formation of AMP, that is energically less costly than de novo synthesis. This Prosthecochloris aestuarii (strain DSM 271 / SK 413) protein is Adenine phosphoribosyltransferase.